The primary structure comprises 727 residues: 1,4-alpha-glucan branching enzyme GlgB (727 aa).

Asp405 functions as the Nucleophile in the catalytic mechanism. The Proton donor role is filled by Glu458.

This sequence belongs to the glycosyl hydrolase 13 family. GlgB subfamily. In terms of assembly, monomer.

It catalyses the reaction Transfers a segment of a (1-&gt;4)-alpha-D-glucan chain to a primary hydroxy group in a similar glucan chain.. The protein operates within glycan biosynthesis; glycogen biosynthesis. Catalyzes the formation of the alpha-1,6-glucosidic linkages in glycogen by scission of a 1,4-alpha-linked oligosaccharide from growing alpha-1,4-glucan chains and the subsequent attachment of the oligosaccharide to the alpha-1,6 position. In Yersinia enterocolitica serotype O:8 / biotype 1B (strain NCTC 13174 / 8081), this protein is 1,4-alpha-glucan branching enzyme GlgB.